The primary structure comprises 246 residues: Neuromodulin (246 aa).

A disordered region spans residues 1–246 (MLCCMRRTKQ…EESKADQENA (246 aa)). Residues Cys3 and Cys4 are each lipidated (S-palmitoyl cysteine). The segment covering 9-33 (KQVEKNEDGDQKIEQDGIKPEDKAH) has biased composition (basic and acidic residues). Residues 32–61 (AHKAATKIQASFRGHITRKKLKGEKKADAP) enclose the IQ domain. 2 stretches are compositionally biased toward low complexity: residues 87 to 99 (ASAA…ADSA) and 125 to 157 (SEQP…KAST). A compositionally biased stretch (basic and acidic residues) spans 164 to 176 (KADEAQDKEEPKQ). A compositionally biased stretch (low complexity) spans 177-203 (ADVPAADTTATTTPAAEDATAKATAQP). 2 stretches are compositionally biased toward basic and acidic residues: residues 213 to 225 (TEEK…ETKP) and 237 to 246 (EESKADQENA).

Belongs to the neuromodulin family. As to quaternary structure, binds calmodulin with a greater affinity in the absence of Ca(2+) than in its presence. Post-translationally, palmitoylated. Palmitoylation is essential for plasma membrane association. In terms of tissue distribution, expressed in neurons.

It localises to the cell membrane. The protein localises to the cell projection. It is found in the growth cone membrane. Its subcellular location is the synapse. The protein resides in the filopodium membrane. Functionally, this protein is associated with nerve growth. It is a major component of the motile 'growth cones' that form the tips of elongating axons. Plays a role in axonal and dendritic filopodia induction. The chain is Neuromodulin (GAP43) from Gallus gallus (Chicken).